Here is a 278-residue protein sequence, read N- to C-terminus: Soluble NSF attachment protein homolog FPV011 (278 aa).

Belongs to the SNAP family.

The chain is Soluble NSF attachment protein homolog FPV011 from Fowlpox virus (strain NVSL) (FPV).